The sequence spans 303 residues: Elongation factor Ts (303 aa).

Residues 80 to 83 (TDFV) are involved in Mg(2+) ion dislocation from EF-Tu.

The protein belongs to the EF-Ts family.

The protein localises to the cytoplasm. Functionally, associates with the EF-Tu.GDP complex and induces the exchange of GDP to GTP. It remains bound to the aminoacyl-tRNA.EF-Tu.GTP complex up to the GTP hydrolysis stage on the ribosome. In Clostridium perfringens (strain ATCC 13124 / DSM 756 / JCM 1290 / NCIMB 6125 / NCTC 8237 / Type A), this protein is Elongation factor Ts.